Consider the following 389-residue polypeptide: Protein MEI2-like 7 (389 aa).

Residues 170–184 (RRGMSKVYKPRKPQR) show a composition bias toward basic residues. The interval 170–211 (RRGMSKVYKPRKPQRAGRERSPSPSPVFTTRPMSPTPPMQKL) is disordered. The RRM domain occupies 216 to 320 (TTVMVRNIPN…KIIDIRAARI (105 aa)). Residues 351–370 (PRDGSTAGAGAPSPPAVKTV) form a disordered region.

In terms of biological role, probable RNA-binding protein that may play a role in growth regulation. The chain is Protein MEI2-like 7 (OML7) from Oryza sativa subsp. japonica (Rice).